Here is a 111-residue protein sequence, read N- to C-terminus: Antitoxin PrlF (111 aa).

One can recognise a SpoVT-AbrB domain in the interval 12–59 (TTESKVTIRGQTTIPAPVREALKLKPGQDSIHYEILPGGQVFMCRLGD).

As to quaternary structure, homodimer; forms a complex with YhaV with stoichiometry PrlF(2)-YhaV(4), possibly as a YhaV(2)-PrlF(2)-YhaV(2) complex like the MazFE complex. This complex is seen to dimerize in solution.

Its subcellular location is the cytoplasm. Antitoxin component of a type II toxin-antitoxin (TA) system. Labile antitoxin that binds to the YhaV toxin and neutralizes its ribonuclease activity. Also acts as a transcription factor. The YhaV/PrlF complex binds the prlF-yhaV operon, probably negatively regulating its expression. In terms of biological role, negatively regulates its own expression as well as relieving the export block imposed by high-level synthesis of the LamB-LacZ hybrid protein. Overexpression leads to increased doubling time and also suppresses a htrA (degP) null phenotype. The chain is Antitoxin PrlF (prlF) from Escherichia coli (strain K12).